The following is a 211-amino-acid chain: Uracil phosphoribosyltransferase (211 aa).

5-phospho-alpha-D-ribose 1-diphosphate contacts are provided by residues Arg-78, Arg-103, and 130 to 138; that span reads DPMLATGGT. Residues Ile-195 and 200–202 contribute to the uracil site; that span reads GDA. Asp-201 is a 5-phospho-alpha-D-ribose 1-diphosphate binding site.

It belongs to the UPRTase family. Mg(2+) serves as cofactor.

It carries out the reaction UMP + diphosphate = 5-phospho-alpha-D-ribose 1-diphosphate + uracil. It participates in pyrimidine metabolism; UMP biosynthesis via salvage pathway; UMP from uracil: step 1/1. With respect to regulation, allosterically activated by GTP. Its function is as follows. Catalyzes the conversion of uracil and 5-phospho-alpha-D-ribose 1-diphosphate (PRPP) to UMP and diphosphate. The polypeptide is Uracil phosphoribosyltransferase (Kocuria rhizophila (strain ATCC 9341 / DSM 348 / NBRC 103217 / DC2201)).